The following is a 131-amino-acid chain: Translation initiation factor 5A (131 aa).

Position 37 is a hypusine (Lys-37).

It belongs to the eIF-5A family.

It localises to the cytoplasm. Its function is as follows. Functions by promoting the formation of the first peptide bond. The protein is Translation initiation factor 5A (eIF5A) of Methanococcus vannielii (strain ATCC 35089 / DSM 1224 / JCM 13029 / OCM 148 / SB).